The sequence spans 179 residues: Large ribosomal subunit protein uL5 (179 aa).

It belongs to the universal ribosomal protein uL5 family. In terms of assembly, part of the 50S ribosomal subunit; part of the 5S rRNA/L5/L18/L25 subcomplex. Contacts the 5S rRNA and the P site tRNA. Forms a bridge to the 30S subunit in the 70S ribosome.

In terms of biological role, this is one of the proteins that bind and probably mediate the attachment of the 5S RNA into the large ribosomal subunit, where it forms part of the central protuberance. In the 70S ribosome it contacts protein S13 of the 30S subunit (bridge B1b), connecting the 2 subunits; this bridge is implicated in subunit movement. Contacts the P site tRNA; the 5S rRNA and some of its associated proteins might help stabilize positioning of ribosome-bound tRNAs. This is Large ribosomal subunit protein uL5 from Carboxydothermus hydrogenoformans (strain ATCC BAA-161 / DSM 6008 / Z-2901).